The sequence spans 419 residues: MQKLIIHGGKPLKGSINISGAKNAVLPIMAASILTDKLHITNVPKLTDVSTMKDLLRSHGADIKILEHPDEFELIINTGNINNFTANYEIVRKMRASIWVLGPLLTKYGKAKVSLPGGCAIGARQVDLHIAVLKAMGATIEIEDGYINASSKGRIKGTHFVFDKVSVGATINAILAAVLAEGETVLFNCGREPEIVDLCNCLIKMGADIAGVGTSEITIKGKDSLNKASYKVLSDRIEAGTYMFAAAITKGDVKICGIDYHIIENIALKLIETGLKVVQINNGVQVTYEGKLNSVDLETNPYPGFATDLQAQFMSLMTLSSGVSMITENIFENRFMHVPELCRMGADIVVRGNKAVVRGVEMLKGAEVMASDLRASVSLILAGLSTNSKTVLHRIYHLDRGFQDLEKKLSNCGADIKRV.

Residue 22 to 23 (KN) coordinates phosphoenolpyruvate. Residue arginine 95 coordinates UDP-N-acetyl-alpha-D-glucosamine. Cysteine 119 functions as the Proton donor in the catalytic mechanism. Position 119 is a 2-(S-cysteinyl)pyruvic acid O-phosphothioketal (cysteine 119). UDP-N-acetyl-alpha-D-glucosamine is bound by residues 164–167 (KVSV), aspartate 308, and isoleucine 330.

This sequence belongs to the EPSP synthase family. MurA subfamily.

The protein resides in the cytoplasm. The catalysed reaction is phosphoenolpyruvate + UDP-N-acetyl-alpha-D-glucosamine = UDP-N-acetyl-3-O-(1-carboxyvinyl)-alpha-D-glucosamine + phosphate. The protein operates within cell wall biogenesis; peptidoglycan biosynthesis. In terms of biological role, cell wall formation. Adds enolpyruvyl to UDP-N-acetylglucosamine. This is UDP-N-acetylglucosamine 1-carboxyvinyltransferase from Rickettsia felis (strain ATCC VR-1525 / URRWXCal2) (Rickettsia azadi).